The sequence spans 414 residues: Translation initiation factor 2 subunit gamma (414 aa).

One can recognise a tr-type G domain in the interval 8–206 (QPEVNIGVVG…AIEKFIPTPP (199 aa)). The segment at 17 to 24 (GHVDHGKT) is G1. Mg(2+) contacts are provided by D20, T24, G45, and T47. Residue 20–25 (DHGKTT) participates in GTP binding. The G2 stretch occupies residues 45–49 (GMTIK). Zn(2+) contacts are provided by C60, C63, C75, and C77. Residues 93–96 (DAPG) form a G3 region. GTP is bound by residues 149-152 (NKVD) and 184-186 (SAL). Residues 149–152 (NKVD) are G4. The G5 stretch occupies residues 184-186 (SAL).

It belongs to the TRAFAC class translation factor GTPase superfamily. Classic translation factor GTPase family. EIF2G subfamily. Heterotrimer composed of an alpha, a beta and a gamma chain. It depends on Mg(2+) as a cofactor.

The catalysed reaction is GTP + H2O = GDP + phosphate + H(+). Its function is as follows. eIF-2 functions in the early steps of protein synthesis by forming a ternary complex with GTP and initiator tRNA. The protein is Translation initiation factor 2 subunit gamma of Aeropyrum pernix (strain ATCC 700893 / DSM 11879 / JCM 9820 / NBRC 100138 / K1).